A 584-amino-acid polypeptide reads, in one-letter code: Tyrosine-protein kinase Dnt (584 aa).

The first 40 residues, 1 to 40, serve as a signal peptide directing secretion; sequence MESVNKCGKSASTRNCTVKMSRKMWVLSLLALAALQLHSG. The Extracellular segment spans residues 41–208; sequence SEVAAHLNVF…LETVMLPPTG (168 aa). The WIF domain maps to 49–180; the sequence is VFLNPVEVMR…HLVFRRKKIC (132 aa). Residues N124, N163, N168, and N183 are each glycosylated (N-linked (GlcNAc...) asparagine). The helical transmembrane segment at 209-229 threads the bilayer; that stretch reads LITLVVGVSVAMGSVCLLLMI. Over 230–584 the chain is Cytoplasmic; the sequence is AYCVKGAANK…EFYSQITRYV (355 aa). Residues 241–261 form a disordered region; sequence QHHQHGGQPMRTSSFQRLNTH. Positions 250–261 are enriched in polar residues; that stretch reads MRTSSFQRLNTH. A Protein kinase domain is found at 317 to 577; that stretch reads VRLSSLLQEG…QLQSCLSEFY (261 aa). Residues 323–331 and K345 each bind ATP; that span reads LQEGTFGRV. D442 (proton acceptor) is an active-site residue. A Phosphotyrosine; by autocatalysis modification is found at Y472.

Belongs to the protein kinase superfamily. Tyr protein kinase family. In terms of tissue distribution, expressed in dynamic domains in the embryonic epidermis, many of which border on sites of epithelial invagination into the embryo interior, including ventral furrow, cephalic furrow, fore- and hindgut, optic lobe and tracheal pits. Later in embryogenesis, expression is seen in imaginal tissues.

The protein localises to the cell membrane. It carries out the reaction L-tyrosyl-[protein] + ATP = O-phospho-L-tyrosyl-[protein] + ADP + H(+). Its function is as follows. May play an essential role in neuronal pathway recognition and ventral muscle attachment site selection. This is Tyrosine-protein kinase Dnt (dnt) from Drosophila melanogaster (Fruit fly).